A 206-amino-acid polypeptide reads, in one-letter code: Small ribosomal subunit protein uS4 (206 aa).

Residues 98 to 155 (TRLDNVVYRLGWALSRAQARQIVSHGKIAVNGKRVNIPSYNLKPGDVVELLDKDLIPV) enclose the S4 RNA-binding domain.

It belongs to the universal ribosomal protein uS4 family. Part of the 30S ribosomal subunit. Contacts protein S5. The interaction surface between S4 and S5 is involved in control of translational fidelity.

In terms of biological role, one of the primary rRNA binding proteins, it binds directly to 16S rRNA where it nucleates assembly of the body of the 30S subunit. Its function is as follows. With S5 and S12 plays an important role in translational accuracy. This chain is Small ribosomal subunit protein uS4, found in Dictyoglomus turgidum (strain DSM 6724 / Z-1310).